A 337-amino-acid polypeptide reads, in one-letter code: Adenylosuccinate synthetase (337 aa).

Residues 12 to 18 (GDEGKGK) and 42 to 44 (GHT) each bind GTP. Asp-13 serves as the catalytic Proton acceptor. Mg(2+) is bound by residues Asp-13 and Gly-42. IMP contacts are provided by residues 13 to 16 (DEGK), 40 to 43 (NAGH), Thr-124, Arg-138, Gln-176, Thr-191, and Arg-253. His-43 (proton donor) is an active-site residue. 249 to 255 (TVTGRRR) serves as a coordination point for substrate. GTP-binding positions include Arg-255, 281-283 (GVD), and 321-323 (STG).

This sequence belongs to the adenylosuccinate synthetase family. In terms of assembly, homodimer. It depends on Mg(2+) as a cofactor.

The protein localises to the cytoplasm. The enzyme catalyses IMP + L-aspartate + GTP = N(6)-(1,2-dicarboxyethyl)-AMP + GDP + phosphate + 2 H(+). It functions in the pathway purine metabolism; AMP biosynthesis via de novo pathway; AMP from IMP: step 1/2. In terms of biological role, plays an important role in the de novo pathway of purine nucleotide biosynthesis. Catalyzes the first committed step in the biosynthesis of AMP from IMP. This is Adenylosuccinate synthetase from Archaeoglobus fulgidus (strain ATCC 49558 / DSM 4304 / JCM 9628 / NBRC 100126 / VC-16).